The sequence spans 207 residues: Large ribosomal subunit protein uL4 (207 aa).

It belongs to the universal ribosomal protein uL4 family. In terms of assembly, part of the 50S ribosomal subunit.

Functionally, one of the primary rRNA binding proteins, this protein initially binds near the 5'-end of the 23S rRNA. It is important during the early stages of 50S assembly. It makes multiple contacts with different domains of the 23S rRNA in the assembled 50S subunit and ribosome. Forms part of the polypeptide exit tunnel. The chain is Large ribosomal subunit protein uL4 from Geobacter sulfurreducens (strain ATCC 51573 / DSM 12127 / PCA).